The sequence spans 248 residues: Probable transcriptional regulatory protein Pcar_2335 (248 aa).

It belongs to the TACO1 family.

It is found in the cytoplasm. This chain is Probable transcriptional regulatory protein Pcar_2335, found in Syntrophotalea carbinolica (strain DSM 2380 / NBRC 103641 / GraBd1) (Pelobacter carbinolicus).